The primary structure comprises 153 residues: Small ribosomal subunit protein uS19 (153 aa).

A unknown region spans residues 1-63 (MGFRGAWNKR…QEIWDEFRAF (63 aa)). The tract at residues 64-153 (VNKKAWVDPK…EKSAKVVKKK (90 aa)) is small ribosomal subunit protein uS19.

This sequence belongs to the universal ribosomal protein uS19 family.

Protein S19 forms a complex with S13 that binds strongly to the 16S ribosomal RNA. In Hydrogenobaculum sp. (strain Y04AAS1), this protein is Small ribosomal subunit protein uS19.